Here is a 412-residue protein sequence, read N- to C-terminus: Arginine biosynthesis bifunctional protein ArgJ (412 aa).

Substrate is bound by residues T158, K184, T195, E284, N407, and S412. T195 (nucleophile) is an active-site residue.

It belongs to the ArgJ family. In terms of assembly, heterotetramer of two alpha and two beta chains.

It localises to the cytoplasm. It catalyses the reaction N(2)-acetyl-L-ornithine + L-glutamate = N-acetyl-L-glutamate + L-ornithine. The enzyme catalyses L-glutamate + acetyl-CoA = N-acetyl-L-glutamate + CoA + H(+). The protein operates within amino-acid biosynthesis; L-arginine biosynthesis; L-ornithine and N-acetyl-L-glutamate from L-glutamate and N(2)-acetyl-L-ornithine (cyclic): step 1/1. Its pathway is amino-acid biosynthesis; L-arginine biosynthesis; N(2)-acetyl-L-ornithine from L-glutamate: step 1/4. Its function is as follows. Catalyzes two activities which are involved in the cyclic version of arginine biosynthesis: the synthesis of N-acetylglutamate from glutamate and acetyl-CoA as the acetyl donor, and of ornithine by transacetylation between N(2)-acetylornithine and glutamate. This is Arginine biosynthesis bifunctional protein ArgJ from Bartonella quintana (strain Toulouse) (Rochalimaea quintana).